A 334-amino-acid chain; its full sequence is MQRSVHELLTPRTIDVKESSATRAKVTLEPLERGFGHTLGSALRRILLSSMPGCAVTEAQIDGVLHEYSAIEGVQEDVIEILLNLKGVAVKMNGRDDAELTLSKKGPGVVTAGDIKLDHDVEIANPEHVICHLSENGEVNMRLRVARGRGYEPADQRGLDEDETRAIGRLQLDATFSPVRRVAYAVESARVEQRTDLDKLVIDLETNGTIDPEEAIRRAATILQQQLAVFVDFDHEKEPERVEEEEEIDPILLRPVDDLELTVRSANCLKAENIYYIGDLIQRTEVELLKTPNLGKKSLTEIKDVLASRGLSLGMRLDNWPPASLRGDDRVLGG.

The segment at 1–234 is alpha N-terminal domain (alpha-NTD); it reads MQRSVHELLT…QQLAVFVDFD (234 aa). An alpha C-terminal domain (alpha-CTD) region spans residues 248 to 334; that stretch reads IDPILLRPVD…LRGDDRVLGG (87 aa).

Belongs to the RNA polymerase alpha chain family. As to quaternary structure, homodimer. The RNAP catalytic core consists of 2 alpha, 1 beta, 1 beta' and 1 omega subunit. When a sigma factor is associated with the core the holoenzyme is formed, which can initiate transcription.

It carries out the reaction RNA(n) + a ribonucleoside 5'-triphosphate = RNA(n+1) + diphosphate. Its function is as follows. DNA-dependent RNA polymerase catalyzes the transcription of DNA into RNA using the four ribonucleoside triphosphates as substrates. The protein is DNA-directed RNA polymerase subunit alpha of Marinobacter nauticus (strain ATCC 700491 / DSM 11845 / VT8) (Marinobacter aquaeolei).